A 425-amino-acid chain; its full sequence is Serine--tRNA ligase (425 aa).

L-serine is bound at residue 230 to 232; that stretch reads TAE. 261–263 is a binding site for ATP; that stretch reads RSE. Glutamate 284 lines the L-serine pocket. 348–351 provides a ligand contact to ATP; the sequence is EISS. L-serine is bound at residue serine 384.

The protein belongs to the class-II aminoacyl-tRNA synthetase family. Type-1 seryl-tRNA synthetase subfamily. Homodimer. The tRNA molecule binds across the dimer.

Its subcellular location is the cytoplasm. It carries out the reaction tRNA(Ser) + L-serine + ATP = L-seryl-tRNA(Ser) + AMP + diphosphate + H(+). The enzyme catalyses tRNA(Sec) + L-serine + ATP = L-seryl-tRNA(Sec) + AMP + diphosphate + H(+). Its pathway is aminoacyl-tRNA biosynthesis; selenocysteinyl-tRNA(Sec) biosynthesis; L-seryl-tRNA(Sec) from L-serine and tRNA(Sec): step 1/1. Functionally, catalyzes the attachment of serine to tRNA(Ser). Is also able to aminoacylate tRNA(Sec) with serine, to form the misacylated tRNA L-seryl-tRNA(Sec), which will be further converted into selenocysteinyl-tRNA(Sec). In Streptococcus equi subsp. zooepidemicus (strain MGCS10565), this protein is Serine--tRNA ligase.